Consider the following 287-residue polypeptide: 4-hydroxybenzoate octaprenyltransferase (287 aa).

6 consecutive transmembrane segments (helical) span residues 41–61, 89–109, 133–153, 158–178, 202–224, and 267–287; these read WPLL…GCAM, WEAI…ILPL, FFAI…PMAF, DTVP…SVAY, FGRF…YVWI, and NNWL…LAGS.

This sequence belongs to the UbiA prenyltransferase family. Mg(2+) is required as a cofactor.

The protein localises to the cell inner membrane. The enzyme catalyses all-trans-octaprenyl diphosphate + 4-hydroxybenzoate = 4-hydroxy-3-(all-trans-octaprenyl)benzoate + diphosphate. It participates in cofactor biosynthesis; ubiquinone biosynthesis. Catalyzes the prenylation of para-hydroxybenzoate (PHB) with an all-trans polyprenyl group. Mediates the second step in the final reaction sequence of ubiquinone-8 (UQ-8) biosynthesis, which is the condensation of the polyisoprenoid side chain with PHB, generating the first membrane-bound Q intermediate 3-octaprenyl-4-hydroxybenzoate. This Burkholderia lata (strain ATCC 17760 / DSM 23089 / LMG 22485 / NCIMB 9086 / R18194 / 383) protein is 4-hydroxybenzoate octaprenyltransferase.